A 20-amino-acid chain; its full sequence is N-acetyl-D-galactosamine-binding lectin subunit B (20 aa).

In terms of assembly, disulfide-linked heterodimer of A and B chains.

Its function is as follows. Gal / GalNAc-specific lectin. Agglutinates both native and trypsin-treated rabbit erythrocytes but not human erythrocytes irrespective of blood group type. This is N-acetyl-D-galactosamine-binding lectin subunit B from Iris hollandica (Dutch iris).